Consider the following 262-residue polypeptide: Acyl-[acyl-carrier-protein]--UDP-N-acetylglucosamine O-acyltransferase (262 aa).

Belongs to the transferase hexapeptide repeat family. LpxA subfamily. In terms of assembly, homotrimer.

The protein resides in the cytoplasm. It catalyses the reaction a (3R)-hydroxyacyl-[ACP] + UDP-N-acetyl-alpha-D-glucosamine = a UDP-3-O-[(3R)-3-hydroxyacyl]-N-acetyl-alpha-D-glucosamine + holo-[ACP]. Its pathway is glycolipid biosynthesis; lipid IV(A) biosynthesis; lipid IV(A) from (3R)-3-hydroxytetradecanoyl-[acyl-carrier-protein] and UDP-N-acetyl-alpha-D-glucosamine: step 1/6. Its function is as follows. Involved in the biosynthesis of lipid A, a phosphorylated glycolipid that anchors the lipopolysaccharide to the outer membrane of the cell. In Paracidovorax citrulli (strain AAC00-1) (Acidovorax citrulli), this protein is Acyl-[acyl-carrier-protein]--UDP-N-acetylglucosamine O-acyltransferase.